A 460-amino-acid polypeptide reads, in one-letter code: Glycine--tRNA ligase (460 aa).

Residues arginine 99 and glutamate 162 each contribute to the substrate site. ATP contacts are provided by residues 194-196 (RNE), 204-209 (FRTREF), 281-282 (EL), and 325-328 (GVGR). 209–213 (FEQME) lines the substrate pocket. 321–325 (EPAAG) contacts substrate.

The protein belongs to the class-II aminoacyl-tRNA synthetase family. In terms of assembly, homodimer.

Its subcellular location is the cytoplasm. The catalysed reaction is tRNA(Gly) + glycine + ATP = glycyl-tRNA(Gly) + AMP + diphosphate. Its function is as follows. Catalyzes the attachment of glycine to tRNA(Gly). The sequence is that of Glycine--tRNA ligase from Streptomyces coelicolor (strain ATCC BAA-471 / A3(2) / M145).